Consider the following 421-residue polypeptide: Granaticin polyketide putative beta-ketoacyl synthase 1 (421 aa).

One can recognise a Ketosynthase family 3 (KS3) domain in the interval 2–416; the sequence is TRRVVITGVG…GFQSAMVLHR (415 aa). Residues C169, H309, and H346 each act as for beta-ketoacyl synthase activity in the active site.

Belongs to the thiolase-like superfamily. Beta-ketoacyl-ACP synthases family.

It functions in the pathway antibiotic biosynthesis; granaticin biosynthesis. The polypeptide is Granaticin polyketide putative beta-ketoacyl synthase 1 (gra-orf1) (Streptomyces violaceoruber).